Here is a 108-residue protein sequence, read N- to C-terminus: Replication initiation control protein YabA (108 aa).

Zn(2+) contacts are provided by His-83, Cys-85, Cys-99, and Cys-102.

It belongs to the YabA family. As to quaternary structure, homotetramer. Interacts with both DnaA and DnaN, acting as a bridge between these two proteins. Zn(2+) is required as a cofactor.

The protein localises to the cytoplasm. Its subcellular location is the nucleoid. Involved in control of chromosome replication initiation. Inhibits the cooperative binding of DnaA to the oriC region, thus negatively regulating initiation of chromosome replication. Inhibits the ability of DnaA-ATP to form a helix on DNA; does not disassemble preformed DnaA-DNA helices. Decreases the residence time of DnaA on the chromosome at its binding sites (oriC, replication forks and promoter-binding sites). Tethers DnaA to the replication machinery via the DNA polymerase beta sliding clamp subunit (dnaN). Associates with oriC and other DnaA targets on the chromosome in a DnaA-dependent manner. This is Replication initiation control protein YabA from Lactococcus lactis subsp. cremoris (strain SK11).